We begin with the raw amino-acid sequence, 152 residues long: Transcriptional repressor NrdR (152 aa).

A zinc finger lies at 3–34 (CPFCGHADTQVVDSRVSEDGASIRRRRRCLEC). An ATP-cone domain is found at 49–139 (PQVVKQDGHR…VYRSFQDVAE (91 aa)).

This sequence belongs to the NrdR family. Requires Zn(2+) as cofactor.

Functionally, negatively regulates transcription of bacterial ribonucleotide reductase nrd genes and operons by binding to NrdR-boxes. This chain is Transcriptional repressor NrdR, found in Laribacter hongkongensis (strain HLHK9).